The following is a 409-amino-acid chain: MAVPLGALWAWSVLDKAVISYYSRKYKPVPLPERPNYSHKDVSIIVPTIDTEDTFTECMRLWLKANPREIVIATVERNKARVEQLIEPLRQQHADKIMVVTAALANKRHQLIVGVKSARGKIFALVDDDVYWHVDSVVPYLLAPFEDAEVGAVAGIQSAEVPPERQDVRVITPWEATATFDLCQWKGSREVHFAADGGCWCLSARTLFIRASILQDQSFANAYTQEVIGRRLVNTADDVVLTGLVFDRGWKVSIQNTPEAEVTTNIPRDHRLVWQVLRWDRGNFRTFLGYMLVSPGYRKMMQRHPYTTWKMVERLARPIWAFAYVWAWLQTLYTAPWIAYAYIAWMAFGWKGWLPTYREFLKRYPYCGRQMWAPLLMDYIGPIVDIYVYLTINNDDWLTRRADTKDIED.

The N-linked (GlcNAc...) asparagine glycan is linked to asparagine 36. The helical transmembrane segment at 319 to 339 (IWAFAYVWAWLQTLYTAPWIA) threads the bilayer.

It belongs to the GT2 glycosyltransferase family.

The protein resides in the membrane. It functions in the pathway secondary metabolite biosynthesis. Its function is as follows. NDP-glycosyltransferase; part of the gene cluster that mediates the biosynthesis of luteodienoside A, a glycosylated polyketide consisting of an unusual 1-O-beta-D-glucopyranosyl-myo-inositol (glucinol) ester of 3-hydroxy-2,2,4-trimethylocta-4,6-dienoic acid. LtbB likely serves as a glucinol synthase by transferring D-glucose to myo-inositol using NDP-glucose as a substrate. The ltbA carnitine O-acyltransferase (cAT) domain uses glucinol produced by the glycosyltransferase ltbB as an offloading substrate to release luteodienoside A from the HR-PKS. Since ltbA and ltbB are sufficient for the biosynthesis of luteodienoside A, the functions of the methyltransferase ltbC and the FAD-binding monooxygenase ltbD within the pathway remain obscur. This is NDP-glycosyltransferase ltbB from Aspergillus luteorubrus.